The primary structure comprises 436 residues: 2-aminohexano-6-lactam racemase (436 aa).

Pyridoxal 5'-phosphate contacts are provided by residues 110–111 (GS), Y137, and 238–241 (DEVK). Residue Y137 is part of the active site. K267 is modified (N6-(pyridoxal phosphate)lysine). T295 serves as a coordination point for pyridoxal 5'-phosphate.

The protein belongs to the class-III pyridoxal-phosphate-dependent aminotransferase family. As to quaternary structure, monomer. Pyridoxal 5'-phosphate serves as cofactor.

It carries out the reaction L-2-aminohexano-6-lactam = D-2-aminohexano-6-lactam. Catalyzes the interconversion of L-alpha-amino-epsilon-caprolactam and D-alpha-amino-epsilon-caprolactam. The polypeptide is 2-aminohexano-6-lactam racemase (Achromobacter obae).